The following is a 604-amino-acid chain: Replication protein A 70 kDa DNA-binding subunit B (604 aa).

Positions 170 to 256 (WTIKVRVTNK…QNDYEMTLNE (87 aa)) form a DNA-binding region, OB. Residues 468–488 (CKTCNKKVTEAMDSGYWCESC) form a C4-type zinc finger.

Belongs to the replication factor A protein 1 family. In terms of assembly, heterotrimer of RPA1, RPA2 and RPA3 (canonical replication protein A complex).

The protein localises to the nucleus. Component of the replication protein A complex (RPA) required for DNA recombination, repair and replication. The activity of RPA is mediated by single-stranded DNA binding and protein interactions. Probably involved in repair of double-strand DNA breaks (DSBs) induced by genotoxic stresses. This chain is Replication protein A 70 kDa DNA-binding subunit B (RPA1B), found in Arabidopsis thaliana (Mouse-ear cress).